A 103-amino-acid polypeptide reads, in one-letter code: NADH-quinone oxidoreductase subunit K (103 aa).

Helical transmembrane passes span 5–25 (ISSYLMVALILFCVGLYGALT), 30–50 (VVVLLSIELMLNAVNINLVAF), and 66–86 (LFTMTVAAAEVAVGLAILIAL).

The protein belongs to the complex I subunit 4L family. NDH-1 is composed of 14 different subunits. Subunits NuoA, H, J, K, L, M, N constitute the membrane sector of the complex.

The protein localises to the cell membrane. The enzyme catalyses a quinone + NADH + 5 H(+)(in) = a quinol + NAD(+) + 4 H(+)(out). Functionally, NDH-1 shuttles electrons from NADH, via FMN and iron-sulfur (Fe-S) centers, to quinones in the respiratory chain. The immediate electron acceptor for the enzyme in this species is believed to be a menaquinone. Couples the redox reaction to proton translocation (for every two electrons transferred, four hydrogen ions are translocated across the cytoplasmic membrane), and thus conserves the redox energy in a proton gradient. The protein is NADH-quinone oxidoreductase subunit K of Brevibacillus brevis (strain 47 / JCM 6285 / NBRC 100599).